Here is a 503-residue protein sequence, read N- to C-terminus: NAD(P)H-quinone oxidoreductase chain 4, chloroplastic (503 aa).

14 helical membrane-spanning segments follow: residues 3 to 23 (FFPW…IVFF), 37 to 57 (LCIC…HFQV), 84 to 104 (GLSV…TLAA), 113 to 130 (LFHF…GLFA), 134 to 154 (LFLF…LLSM), 167 to 187 (FILY…GLTL), 208 to 228 (ALEI…SPIL), 242 to 262 (HYST…YGLI), 274 to 294 (SLFS…AALT), 305 to 325 (IAYS…SMTD), 330 to 350 (GALL…FLAG), 385 to 405 (SLAL…FGII), 416 to 436 (ILIS…SLSM), and 462 to 482 (LFLS…PDFV).

The protein belongs to the complex I subunit 4 family.

It localises to the plastid. Its subcellular location is the chloroplast thylakoid membrane. The enzyme catalyses a plastoquinone + NADH + (n+1) H(+)(in) = a plastoquinol + NAD(+) + n H(+)(out). It catalyses the reaction a plastoquinone + NADPH + (n+1) H(+)(in) = a plastoquinol + NADP(+) + n H(+)(out). This is NAD(P)H-quinone oxidoreductase chain 4, chloroplastic from Ipomoea purpurea (Common morning glory).